The sequence spans 366 residues: Quinolinate synthase (366 aa).

Residues His44 and Ser61 each coordinate iminosuccinate. Residue Cys108 coordinates [4Fe-4S] cluster. Iminosuccinate-binding positions include 139-141 (YIN) and Ser160. Residue Cys228 coordinates [4Fe-4S] cluster. Residues 254–256 (HPE) and Thr271 each bind iminosuccinate. Cys318 is a binding site for [4Fe-4S] cluster.

The protein belongs to the quinolinate synthase family. Type 3 subfamily. [4Fe-4S] cluster is required as a cofactor.

Its subcellular location is the cytoplasm. The enzyme catalyses iminosuccinate + dihydroxyacetone phosphate = quinolinate + phosphate + 2 H2O + H(+). It functions in the pathway cofactor biosynthesis; NAD(+) biosynthesis; quinolinate from iminoaspartate: step 1/1. Its function is as follows. Catalyzes the condensation of iminoaspartate with dihydroxyacetone phosphate to form quinolinate. This Listeria innocua serovar 6a (strain ATCC BAA-680 / CLIP 11262) protein is Quinolinate synthase.